The sequence spans 562 residues: Pyruvate kinase isozyme G, chloroplastic (562 aa).

Residue R121 participates in substrate binding. The K(+) site is built by N123, S125, D156, and T157. 123-126 (NMSH) lines the ATP pocket. E308 provides a ligand contact to Mg(2+). 3 residues coordinate substrate: G331, D332, and T364. Residue D332 coordinates Mg(2+).

Belongs to the pyruvate kinase family. In terms of assembly, homotetramer. The cofactor is Mg(2+). Requires K(+) as cofactor. Highest levels in leaves. Also found in stems, roots and flowers.

It is found in the plastid. The protein resides in the chloroplast. The catalysed reaction is pyruvate + ATP = phosphoenolpyruvate + ADP + H(+). It participates in carbohydrate degradation; glycolysis; pyruvate from D-glyceraldehyde 3-phosphate: step 5/5. This is Pyruvate kinase isozyme G, chloroplastic from Nicotiana tabacum (Common tobacco).